The following is a 561-amino-acid chain: Arginine--tRNA ligase (561 aa).

The short motif at 128–138 (ANPTGPLHVGH) is the 'HIGH' region element.

The protein belongs to the class-I aminoacyl-tRNA synthetase family. In terms of assembly, monomer.

Its subcellular location is the cytoplasm. It catalyses the reaction tRNA(Arg) + L-arginine + ATP = L-arginyl-tRNA(Arg) + AMP + diphosphate. This chain is Arginine--tRNA ligase, found in Marinobacter nauticus (strain ATCC 700491 / DSM 11845 / VT8) (Marinobacter aquaeolei).